A 152-amino-acid chain; its full sequence is 3-hydroxyacyl-[acyl-carrier-protein] dehydratase FabZ (152 aa).

Residue His-57 is part of the active site.

Belongs to the thioester dehydratase family. FabZ subfamily.

It localises to the cytoplasm. The catalysed reaction is a (3R)-hydroxyacyl-[ACP] = a (2E)-enoyl-[ACP] + H2O. Functionally, involved in unsaturated fatty acids biosynthesis. Catalyzes the dehydration of short chain beta-hydroxyacyl-ACPs and long chain saturated and unsaturated beta-hydroxyacyl-ACPs. This is 3-hydroxyacyl-[acyl-carrier-protein] dehydratase FabZ from Pasteurella multocida (strain Pm70).